Here is a 639-residue protein sequence, read N- to C-terminus: Chaperone protein DnaK 1 (639 aa).

Residue Thr-199 is modified to Phosphothreonine; by autocatalysis. Residues Gln-603 to Pro-612 show a composition bias toward low complexity. The segment at Gln-603–Lys-639 is disordered. The segment covering Asn-625–Lys-639 has biased composition (acidic residues).

The protein belongs to the heat shock protein 70 family.

Acts as a chaperone. The protein is Chaperone protein DnaK 1 of Photobacterium profundum (strain SS9).